The sequence spans 150 residues: Leukotriene C4 synthase (150 aa).

At 1-6 the chain is on the cytoplasmic side; that stretch reads MKDEVA. The chain crosses the membrane as a helical span at residues 7 to 27; it reads LLATVTLVGVLLQAYFSLQVI. Residues 28–48 lie on the Lumenal side of the membrane; the sequence is SARRAFHVSPPLTSGPPEFER. R30 contacts glutathione. The active-site Proton donor is R31. The residue at position 36 (S36) is a Phosphoserine. Residues 49-69 traverse the membrane as a helical segment; that stretch reads VFRAQVNCSEYFPLFLATLWV. Residues 51–55, Q53, and 58–59 contribute to the glutathione site; these read RAQVN and EY. Residues 70-73 lie on the Cytoplasmic side of the membrane; the sequence is AGIF. Residues 74–94 form a helical membrane-spanning segment; sequence FHEGAAALCGLFYLFARLRYF. 93-97 serves as a coordination point for glutathione; that stretch reads YFQGY. The Lumenal portion of the chain corresponds to 95–104; sequence QGYARSAQLR. R104 functions as the Proton acceptor in the catalytic mechanism. The chain crosses the membrane as a helical span at residues 105-124; the sequence is LTPLYASARALWLLVAMAAL. The Cytoplasmic portion of the chain corresponds to 125–150; that stretch reads GLLVHFLPGTLRTALFRWLQMLLPMA.

This sequence belongs to the MAPEG family. Homotrimer. Interacts with ALOX5AP and ALOX5. Phosphorylation at Ser-36 by RPS6KB1 inhibits the leukotriene-C4 synthase activity. As to expression, widely expressed.

It localises to the nucleus outer membrane. The protein localises to the endoplasmic reticulum membrane. The protein resides in the nucleus membrane. The enzyme catalyses leukotriene C4 = leukotriene A4 + glutathione. The catalysed reaction is (13S,14S)-epoxy-(4Z,7Z,9E,11E,16Z,19Z)-docosahexaenoate + glutathione = (13R)-S-glutathionyl-(14S)-hydroxy-(4Z,7Z,9E,11E,16Z,19Z)-docosahexaenoate. It participates in lipid metabolism; leukotriene C4 biosynthesis. Inhibited by MK886. In terms of biological role, catalyzes the conjugation of leukotriene A4 with reduced glutathione (GSH) to form leukotriene C4 with high specificity. Can also catalyze the transfer of a glutathionyl group from glutathione (GSH) to 13(S),14(S)-epoxy-docosahexaenoic acid to form maresin conjugate in tissue regeneration 1 (MCTR1), a bioactive lipid mediator that possess potent anti-inflammatory and proresolving actions. This chain is Leukotriene C4 synthase (Ltc4s), found in Mus musculus (Mouse).